Consider the following 436-residue polypeptide: Adenosylmethionine-8-amino-7-oxononanoate aminotransferase (436 aa).

A substrate-binding site is contributed by Trp-56. 114 to 115 (GS) is a binding site for pyridoxal 5'-phosphate. Tyr-148 provides a ligand contact to substrate. Position 245 (Asp-245) interacts with pyridoxal 5'-phosphate. Residues Lys-274, Ser-309, and Arg-400 each coordinate substrate. Lys-274 carries the post-translational modification N6-(pyridoxal phosphate)lysine.

This sequence belongs to the class-III pyridoxal-phosphate-dependent aminotransferase family. BioA subfamily. In terms of assembly, homodimer. It depends on pyridoxal 5'-phosphate as a cofactor.

Its subcellular location is the cytoplasm. It carries out the reaction (8S)-8-amino-7-oxononanoate + S-adenosyl-L-methionine = S-adenosyl-4-methylsulfanyl-2-oxobutanoate + (7R,8S)-7,8-diammoniononanoate. The protein operates within cofactor biosynthesis; biotin biosynthesis; 7,8-diaminononanoate from 8-amino-7-oxononanoate (SAM route): step 1/1. Functionally, catalyzes the transfer of the alpha-amino group from S-adenosyl-L-methionine (SAM) to 7-keto-8-aminopelargonic acid (KAPA) to form 7,8-diaminopelargonic acid (DAPA). It is the only aminotransferase known to utilize SAM as an amino donor. In Helicobacter pylori (strain ATCC 700392 / 26695) (Campylobacter pylori), this protein is Adenosylmethionine-8-amino-7-oxononanoate aminotransferase.